The sequence spans 214 residues: Probable transaldolase (214 aa).

Lys-83 acts as the Schiff-base intermediate with substrate in catalysis.

It belongs to the transaldolase family. Type 3B subfamily.

The protein resides in the cytoplasm. It catalyses the reaction D-sedoheptulose 7-phosphate + D-glyceraldehyde 3-phosphate = D-erythrose 4-phosphate + beta-D-fructose 6-phosphate. It functions in the pathway carbohydrate degradation; pentose phosphate pathway; D-glyceraldehyde 3-phosphate and beta-D-fructose 6-phosphate from D-ribose 5-phosphate and D-xylulose 5-phosphate (non-oxidative stage): step 2/3. Transaldolase is important for the balance of metabolites in the pentose-phosphate pathway. The sequence is that of Probable transaldolase from Desulfosudis oleivorans (strain DSM 6200 / JCM 39069 / Hxd3) (Desulfococcus oleovorans).